Consider the following 398-residue polypeptide: Dual-specificity RNA methyltransferase RlmN (398 aa).

Glu119 serves as the catalytic Proton acceptor. A Radical SAM core domain is found at 125-364 (EEERATLCVS…TIVRKTRGDD (240 aa)). The cysteines at positions 132 and 369 are disulfide-linked. The [4Fe-4S] cluster site is built by Cys139, Cys143, and Cys146. Residues 193 to 194 (GE), Ser225, 247 to 249 (SLH), and Asn326 contribute to the S-adenosyl-L-methionine site. Catalysis depends on Cys369, which acts as the S-methylcysteine intermediate.

This sequence belongs to the radical SAM superfamily. RlmN family. Requires [4Fe-4S] cluster as cofactor.

It is found in the cytoplasm. It catalyses the reaction adenosine(2503) in 23S rRNA + 2 reduced [2Fe-2S]-[ferredoxin] + 2 S-adenosyl-L-methionine = 2-methyladenosine(2503) in 23S rRNA + 5'-deoxyadenosine + L-methionine + 2 oxidized [2Fe-2S]-[ferredoxin] + S-adenosyl-L-homocysteine. It carries out the reaction adenosine(37) in tRNA + 2 reduced [2Fe-2S]-[ferredoxin] + 2 S-adenosyl-L-methionine = 2-methyladenosine(37) in tRNA + 5'-deoxyadenosine + L-methionine + 2 oxidized [2Fe-2S]-[ferredoxin] + S-adenosyl-L-homocysteine. Its function is as follows. Specifically methylates position 2 of adenine 2503 in 23S rRNA and position 2 of adenine 37 in tRNAs. m2A2503 modification seems to play a crucial role in the proofreading step occurring at the peptidyl transferase center and thus would serve to optimize ribosomal fidelity. This chain is Dual-specificity RNA methyltransferase RlmN, found in Pectobacterium atrosepticum (strain SCRI 1043 / ATCC BAA-672) (Erwinia carotovora subsp. atroseptica).